We begin with the raw amino-acid sequence, 143 residues long: Transcriptional regulator MraZ (143 aa).

2 SpoVT-AbrB domains span residues 5–47 (EYRH…TQEE) and 76–119 (ATEC…SEDR).

It belongs to the MraZ family. In terms of assembly, forms oligomers.

The protein localises to the cytoplasm. Its subcellular location is the nucleoid. The protein is Transcriptional regulator MraZ of Ligilactobacillus salivarius (strain UCC118) (Lactobacillus salivarius).